The following is a 534-amino-acid chain: Hypothemycin biosynthesis cluster protein hpm4 (534 aa).

Disordered stretches follow at residues 34 to 61 (IEPAHSLEDEYSGQSGQGADDDPDSDGP), 110 to 130 (LQSPTTTASSAGSPSCAPLRL), and 236 to 287 (DGTG…KKCI). 2 stretches are compositionally biased toward low complexity: residues 112 to 127 (SPTTTASSAGSPSCAP) and 258 to 275 (TVSSRQTRSRQAARACQT).

Its pathway is secondary metabolite biosynthesis. Its function is as follows. Part of the gene cluster that mediates the biosynthesis of hypothemycin, a resorcylic acid lactone (RAL) that irreversibly inhibits a subset of protein kinases with a conserved cysteine in the ATP binding site such as human ERK2. The first step is performed by both PKSs hmp3 and hmp8 and leads to the production of 7',8'-dehydrozearalenol (DHZ). The highly reducing PKS hpm8 synthesizes the reduced hexaketide (7S,11S,2E,8E)-7,11-dihydroxy-dodeca-2,8-dienoate, which is transferred downstream to the non-reducing PKS hpm3. Hpm3 then extends the reduced hexaketide to a nonaketide, after which regioselective cyclization and macrolactonization affords DHZ. The next step is the conversion of DHZ into aigialomycin C and is performed by the O-methyltransferase hmp5, the FAD-binding monooxygenase hmp7, and the cytochrome P450 monooxygenase hmp1. The wide substrate tolerance of the hmp5 and hmp7 implies that the reactions from DHZ to aigialomycin C can occur in any order. The steps from aigialomycin C to hypothemycin are less well established. The FAD-linked oxidoreductase hmp9 presumably catalyzes oxidation of the C-6' hydroxyl to a ketone. The timing of this oxidation is important, since the resulting enone functional group is a Michael acceptor that can react spontaneously with glutathione, an abundant metabolite in fungal cells. The glutathione S-transferase hmp2 catalyzes cis-trans isomerization of the 7',8' double bond with equilibrium favoring the trans isomer. The hpm6-encoded transporter might preferentially pump hypothemycin out of the cell relative to the trans isomer aigialomycin A. The cis-to-trans isomerization may be coupled with C-4' hydroxylation, since all known hypothemycin analogs containing the enone functional group also have hydroxyl groups at both C-4' and C-5'. This is Hypothemycin biosynthesis cluster protein hpm4 from Hypomyces subiculosus (Nectria subiculosa).